Consider the following 210-residue polypeptide: Tetraspanin-31 (210 aa).

At 1–12 (MVCGGFACSKNA) the chain is on the cytoplasmic side. The chain crosses the membrane as a helical span at residues 13–33 (LCALNVVYMLVGLLLIGVAAW). Residues 34–44 (AKGLGLVSSIH) lie on the Extracellular side of the membrane. The helical transmembrane segment at 45 to 65 (IIGGVIAVGVFLLLIAVAGLV) threads the bilayer. Residues 66–72 (GAVNHHQ) lie on the Cytoplasmic side of the membrane. A helical membrane pass occupies residues 73-93 (VLLFFYMIILGLVFIFQFGIS). Residues 94 to 173 (CSCLAINLSK…FLKHSDEALK (80 aa)) lie on the Extracellular side of the membrane. N-linked (GlcNAc...) asparagine glycans are attached at residues asparagine 100, asparagine 109, asparagine 117, and asparagine 134. Residues 174–194 (ILGGVGLFFSFTEILGVWLAM) form a helical membrane-spanning segment. Residues 195 to 210 (RFRNQKDPRANPSAFL) are Cytoplasmic-facing.

This sequence belongs to the tetraspanin (TM4SF) family.

It is found in the membrane. The chain is Tetraspanin-31 (TSPAN31) from Bos taurus (Bovine).